Consider the following 215-residue polypeptide: Probable transaldolase (215 aa).

Lys-83 (schiff-base intermediate with substrate) is an active-site residue.

Belongs to the transaldolase family. Type 3B subfamily.

It localises to the cytoplasm. It carries out the reaction D-sedoheptulose 7-phosphate + D-glyceraldehyde 3-phosphate = D-erythrose 4-phosphate + beta-D-fructose 6-phosphate. It participates in carbohydrate degradation; pentose phosphate pathway; D-glyceraldehyde 3-phosphate and beta-D-fructose 6-phosphate from D-ribose 5-phosphate and D-xylulose 5-phosphate (non-oxidative stage): step 2/3. Its function is as follows. Transaldolase is important for the balance of metabolites in the pentose-phosphate pathway. The chain is Probable transaldolase from Methanococcus maripaludis (strain C5 / ATCC BAA-1333).